A 425-amino-acid chain; its full sequence is Kynurenine/alpha-aminoadipate aminotransferase, mitochondrial (425 aa).

Residues 1-29 (MNYARFITAASAARNPSPIRTMTDILSRG) constitute a mitochondrion transit peptide. Arginine 20 is a substrate binding site. Lysine 69 carries the post-translational modification N6-acetyllysine. The substrate site is built by tyrosine 74 and tyrosine 142. Lysine 179 carries the N6-acetyllysine modification. Residues 181–208 (EDAKNPQKNTPKFLYTVPNGNNPTGNSL) form a disordered region. The span at 198 to 208 (PNGNNPTGNSL) shows a compositional bias: polar residues. Substrate is bound at residue asparagine 202. Residue lysine 263 is modified to N6-(pyridoxal phosphate)lysine; alternate. An N6-acetyllysine; alternate mark is found at lysine 263, lysine 339, and lysine 367. Lysine 263, lysine 339, and lysine 367 each carry N6-succinyllysine; alternate. Arginine 399 is a binding site for substrate. Lysine 422 bears the N6-acetyllysine mark.

The protein belongs to the class-I pyridoxal-phosphate-dependent aminotransferase family. In terms of assembly, homodimer. It depends on pyridoxal 5'-phosphate as a cofactor. As to expression, higher expression in the liver. Also found in heart, brain, kidney, pancreas, prostate, testis and ovary.

Its subcellular location is the mitochondrion. The enzyme catalyses glycine + 2-oxoglutarate = glyoxylate + L-glutamate. The catalysed reaction is L-kynurenine + 2-oxoglutarate = kynurenate + L-glutamate + H2O. It carries out the reaction L-kynurenine + glyoxylate = kynurenate + glycine + H2O. It catalyses the reaction 3-hydroxy-L-kynurenine + glyoxylate = xanthurenate + glycine + H2O. The enzyme catalyses 2-oxohexanoate + L-kynurenine = L-2-aminohexanoate + kynurenate + H2O. The catalysed reaction is 3-phenylpyruvate + L-kynurenine = kynurenate + L-phenylalanine + H2O. It carries out the reaction 4-methylsulfanyl-2-oxobutanoate + L-kynurenine = kynurenate + L-methionine + H2O. It catalyses the reaction 2-oxo-3-sulfanylpropanoate + L-kynurenine = kynurenate + L-cysteine + H2O. The enzyme catalyses indole-3-pyruvate + L-kynurenine = kynurenate + L-tryptophan + H2O. The catalysed reaction is 2-oxopentanoate + L-kynurenine = L-2-aminopentanoate + kynurenate + H2O. It carries out the reaction 4-methyl-2-oxopentanoate + L-kynurenine = kynurenate + L-leucine + H2O. It catalyses the reaction L-2-aminoadipate + 2-oxoglutarate = 2-oxoadipate + L-glutamate. The enzyme catalyses glyoxylate + L-methionine = 4-methylsulfanyl-2-oxobutanoate + glycine. The catalysed reaction is L-2-aminoadipate + glyoxylate = 2-oxoadipate + glycine. It carries out the reaction L-tyrosine + glyoxylate = 3-(4-hydroxyphenyl)pyruvate + glycine. It catalyses the reaction glyoxylate + L-phenylalanine = 3-phenylpyruvate + glycine. The enzyme catalyses L-tryptophan + glyoxylate = indole-3-pyruvate + glycine. The catalysed reaction is L-leucine + glyoxylate = 4-methyl-2-oxopentanoate + glycine. It carries out the reaction 2-oxobutanoate + L-kynurenine = (2S)-2-aminobutanoate + kynurenate + H2O. It catalyses the reaction 2-oxoadipate + L-kynurenine = L-2-aminoadipate + kynurenate + H2O. Its pathway is amino-acid degradation; L-lysine degradation via saccharopine pathway; glutaryl-CoA from L-lysine: step 4/6. Kynurenine transaminase activity is competitively inhibited by aminoadipate, asparagine, glutamate, histidine, cysteine, lysine, 3-hydroxy-kynurenine and phenylalanine. Its function is as follows. Transaminase with broad substrate specificity. Has transaminase activity towards aminoadipate, kynurenine, methionine and glutamate. Shows activity also towards tryptophan, aspartate and hydroxykynurenine. Accepts a variety of oxo-acids as amino-group acceptors, with a preference for 2-oxoglutarate, 2-oxocaproic acid, phenylpyruvate and alpha-oxo-gamma-methiol butyric acid. Can also use glyoxylate as amino-group acceptor (in vitro). This chain is Kynurenine/alpha-aminoadipate aminotransferase, mitochondrial, found in Homo sapiens (Human).